Reading from the N-terminus, the 141-residue chain is Large-conductance mechanosensitive channel (141 aa).

2 helical membrane-spanning segments follow: residues 16–36 (VIDL…VDSL) and 83–103 (GAFI…FVAI).

It belongs to the MscL family. As to quaternary structure, homopentamer.

It is found in the cell inner membrane. In terms of biological role, channel that opens in response to stretch forces in the membrane lipid bilayer. May participate in the regulation of osmotic pressure changes within the cell. This is Large-conductance mechanosensitive channel from Azoarcus sp. (strain BH72).